Consider the following 477-residue polypeptide: Salivary plasminogen activator alpha 1 (477 aa).

The N-terminal stretch at 1-36 (MVNTMKTKLLCVLLLCGAVFSLPRQETYRQLARGSR) is a signal peptide. The 43-residue stretch at 40–82 (VACKDEITQMTYRRQESWLRPEVRSKRVEHCQCDRGQARCHTV) folds into the Fibronectin type-I domain. 14 disulfides stabilise this stretch: Cys-42–Cys-72, Cys-70–Cys-79, Cys-87–Cys-98, Cys-92–Cys-109, Cys-111–Cys-120, Cys-128–Cys-209, Cys-149–Cys-191, Cys-180–Cys-204, Cys-214–Cys-345, Cys-257–Cys-273, Cys-265–Cys-334, Cys-359–Cys-434, Cys-391–Cys-407, and Cys-424–Cys-452. Positions 83 to 121 (PVNSCSEPRCFNGGTCWQAVYFSDFVCQCPAGYTGKRCE) constitute an EGF-like domain. The Kringle domain occupies 128–209 (CYEGQGVTYR…TSESCSVPVC (82 aa)). Asn-153 carries N-linked (GlcNAc...) asparagine glycosylation. The Peptidase S1 domain occupies 226–476 (STGGLFTDIT…YLGWIRDNMH (251 aa)). Residues His-272 and Asp-321 each act as charge relay system in the active site. N-linked (GlcNAc...) asparagine glycosylation occurs at Asn-398. Residue Ser-428 is the Charge relay system of the active site.

This sequence belongs to the peptidase S1 family. Monomer.

It localises to the secreted. It catalyses the reaction Specific cleavage of Arg-|-Val bond in plasminogen to form plasmin.. With respect to regulation, activity toward plasminogen is stimulated in the presence of fibrin I. In terms of biological role, probably essential to support the feeding habits of this exclusively haematophagous animal. Potent thrombolytic agent. This is Salivary plasminogen activator alpha 1 from Desmodus rotundus (Vampire bat).